The sequence spans 137 residues: Putative nickel-responsive regulator (137 aa).

Ni(2+)-binding residues include His-78, His-89, His-91, and Cys-97.

Belongs to the transcriptional regulatory CopG/NikR family. Ni(2+) serves as cofactor.

In terms of biological role, transcriptional regulator. The sequence is that of Putative nickel-responsive regulator from Syntrophus aciditrophicus (strain SB).